Consider the following 644-residue polypeptide: MAASVHCTLMSVVCNNKNHSARPKLPNSSLLPGFDVVVQAAATRFKKETTTTRATLTFDPPTTNSERAKQRKHTIDPSSPDFQPIPSFEECFPKSTKEHKEVVHEESGHVLKVPFRRVHLSGGEPAFDNYDTSGPQNVNAHIGLAKLRKEWIDRREKLGTPRYTQMYYAKQGIITEEMLYCATREKLDPEFVRSEVARGRAIIPSNKKHLELEPMIVGRKFLVKVNANIGNSAVASSIEEEVYKVQWATMWGADTIMDLSTGRHIHETREWILRNSAVPVGTVPIYQALEKVDGIAENLNWEVFRETLIEQAEQGVDYFTIHAGVLLRYIPLTAKRLTGIVSRGGSIHAKWCLAYHKENFAYEHWDDILDICNQYDVALSIGDGLRPGSIYDANDTAQFAELLTQGELTRRAWEKDVQVMNEGPGHVPMHKIPENMQKQLEWCNEAPFYTLGPLTTDIAPGYDHITSAIGAANIGALGTALLCYVTPKEHLGLPNRDDVKAGVIAYKIAAHAADLAKQHPHAQAWDDALSKARFEFRWMDQFALSLDPMTAMSFHDETLPADGAKVAHFCSMCGPKFCSMKITEDIRKYAEENGYGSAEEAIRQGMDAMSEEFNIAKKTISGEQHGEVGGEIYLPESYVKAAQK.

The transit peptide at 1 to 54 (MAASVHCTLMSVVCNNKNHSARPKLPNSSLLPGFDVVVQAAATRFKKETTTTRA) directs the protein to the chloroplast. The tract at residues 55-83 (TLTFDPPTTNSERAKQRKHTIDPSSPDFQ) is disordered. Residues Asn-228, Met-257, Tyr-286, His-322, 342–344 (SRG), 383–386 (DGLR), and Glu-422 each bind substrate. Zn(2+) is bound at residue His-426. A substrate-binding site is contributed by Tyr-449. His-490 is a binding site for Zn(2+). The [4Fe-4S] cluster site is built by Cys-570, Cys-573, and Cys-578.

The protein belongs to the ThiC family. Homodimer. [4Fe-4S] cluster serves as cofactor. In terms of tissue distribution, strongly expressed in cotyledons, leaves, flowers and siliques, and, to a lower extent, in roots. Expressed in all green tissues, but not in roots, seeds, and petals.

It is found in the plastid. It localises to the chloroplast stroma. The enzyme catalyses 5-amino-1-(5-phospho-beta-D-ribosyl)imidazole + S-adenosyl-L-methionine = 4-amino-2-methyl-5-(phosphooxymethyl)pyrimidine + CO + 5'-deoxyadenosine + formate + L-methionine + 3 H(+). It functions in the pathway cofactor biosynthesis; thiamine diphosphate biosynthesis. Its function is as follows. Catalyzes the synthesis of the hydroxymethylpyrimidine phosphate (HMP-P) moiety of thiamine from aminoimidazole ribotide (AIR) in a radical S-adenosyl-L-methionine (SAM)-dependent reaction. This Arabidopsis thaliana (Mouse-ear cress) protein is Phosphomethylpyrimidine synthase, chloroplastic (THIC).